Consider the following 198-residue polypeptide: Recombination protein RecR (198 aa).

A C4-type zinc finger spans residues 57–72 (CSVCGHITENDPCYIC). The Toprim domain maps to 80-175 (SVICVVEDDK…KVTRLAQGLS (96 aa)).

This sequence belongs to the RecR family.

Functionally, may play a role in DNA repair. It seems to be involved in an RecBC-independent recombinational process of DNA repair. It may act with RecF and RecO. This is Recombination protein RecR from Staphylococcus aureus (strain JH1).